The sequence spans 41 residues: MKVRNSLKSLRSRHRDNRLVRRKGRVYVINKTQRRFKARQG.

It belongs to the bacterial ribosomal protein bL36 family.

This Nitrobacter winogradskyi (strain ATCC 25391 / DSM 10237 / CIP 104748 / NCIMB 11846 / Nb-255) protein is Large ribosomal subunit protein bL36.